Reading from the N-terminus, the 166-residue chain is ATP synthase subunit b (166 aa).

The helical transmembrane segment at 15–37 (TLYYLLIFAALLLLVKHFAWGPV) threads the bilayer.

This sequence belongs to the ATPase B chain family. As to quaternary structure, F-type ATPases have 2 components, F(1) - the catalytic core - and F(0) - the membrane proton channel. F(1) has five subunits: alpha(3), beta(3), gamma(1), delta(1), epsilon(1). F(0) has three main subunits: a(1), b(2) and c(10-14). The alpha and beta chains form an alternating ring which encloses part of the gamma chain. F(1) is attached to F(0) by a central stalk formed by the gamma and epsilon chains, while a peripheral stalk is formed by the delta and b chains.

The protein localises to the cell membrane. In terms of biological role, f(1)F(0) ATP synthase produces ATP from ADP in the presence of a proton or sodium gradient. F-type ATPases consist of two structural domains, F(1) containing the extramembraneous catalytic core and F(0) containing the membrane proton channel, linked together by a central stalk and a peripheral stalk. During catalysis, ATP synthesis in the catalytic domain of F(1) is coupled via a rotary mechanism of the central stalk subunits to proton translocation. Its function is as follows. Component of the F(0) channel, it forms part of the peripheral stalk, linking F(1) to F(0). In Lactobacillus gasseri (strain ATCC 33323 / DSM 20243 / BCRC 14619 / CIP 102991 / JCM 1131 / KCTC 3163 / NCIMB 11718 / NCTC 13722 / AM63), this protein is ATP synthase subunit b.